The sequence spans 384 residues: Gastrin-releasing peptide receptor (384 aa).

Residues 1-39 (MDPNNCSHLNLEVDPFLSCNNTFNQTLNPPKMDNWFHPG) lie on the Extracellular side of the membrane. N5, N20, and N24 each carry an N-linked (GlcNAc...) asparagine glycan. Residues 40–63 (IIYVIPAVYGLIIVIGLIGNITLI) traverse the membrane as a helical segment. Residues 64 to 77 (KIFCTVKSMRNVPN) lie on the Cytoplasmic side of the membrane. The helical transmembrane segment at 78–97 (LFISSLALGDLLLLVTCAPV) threads the bilayer. The Extracellular portion of the chain corresponds to 98–115 (DASKYLADRWLFGRIGCK). A disulfide bridge links C114 with C197. Residues 116–137 (LIPFIQLTSVGVSVFTLTALSA) form a helical membrane-spanning segment. Topologically, residues 138 to 153 (DRYKAIVRPMDIQASH) are cytoplasmic. Residues 154-175 (ALMKICLKAALIWIVSMLLAIP) traverse the membrane as a helical segment. Over 176 to 209 (EAVFSDLHPFHVKDTNQTFISCAPYPHSNELHPK) the chain is Extracellular. The helical transmembrane segment at 210–235 (IHSMASFLVFYIIPLSIISVYYYFIA) threads the bilayer. At 236–265 (RNLIQSAYNLPVEGNIHVKKQIESRKRLAK) the chain is on the cytoplasmic side. The helical transmembrane segment at 266-286 (TVLVFVGLFAFCWLPNHVIYL) threads the bilayer. The Extracellular segment spans residues 287 to 299 (YRSYHYSEVDTSM). The chain crosses the membrane as a helical span at residues 300–326 (LHFITSICARLLAFTNSCVNPFALYLL). The Cytoplasmic portion of the chain corresponds to 327-384 (SKSFRKQFNTQLLCCQPSLLNRSHSTGRSTTCMTSFKSTNPSATFSLINGNICHEGYV). C340 carries S-palmitoyl cysteine lipidation. The residue at position 351 (S351) is a Phosphoserine.

It belongs to the G-protein coupled receptor 1 family. In terms of tissue distribution, expressed in the hippocampal CA1 region (at protein level).

It is found in the cell membrane. Its function is as follows. Receptor for gastrin-releasing peptide (GRP). Signals via association with G proteins that activate a phosphatidylinositol-calcium second messenger system, resulting in Akt phosphorylation. Contributes to the regulation of food intake. Contributes to the perception of prurient stimuli and transmission of itch signals in the spinal cord that promote scratching behavior, but does not play a role in the perception of pain. Contributes primarily to nonhistaminergic itch sensation. In one study, shown to act in the amygdala as part of an inhibitory network which inhibits memory specifically related to learned fear. In another study, shown to contribute to disinhibition of glutamatergic cells in the auditory cortex via signaling on vasoactive intestinal peptide-expressing cells which leads to enhanced auditory fear memories. Contributes to the induction of sighing through signaling in the pre-Botzinger complex, a cluster of several thousand neurons in the ventrolateral medulla responsible for inspiration during respiratory activity. The sequence is that of Gastrin-releasing peptide receptor (Grpr) from Rattus norvegicus (Rat).